A 344-amino-acid polypeptide reads, in one-letter code: 5-formaminoimidazole-4-carboxamide-1-(beta)-D-ribofuranosyl 5'-monophosphate synthetase (344 aa).

5-amino-1-(5-phospho-beta-D-ribosyl)imidazole-4-carboxamide-binding residues include His31 and Ser96. The 195-residue stretch at 130–324 (MELLQRAGVP…YFDRPMDMGE (195 aa)) folds into the ATP-grasp domain. ATP-binding positions include 153–198 (PVIV…VPAY) and Glu220. Residue Asn240 participates in 5-amino-1-(5-phospho-beta-D-ribosyl)imidazole-4-carboxamide binding. 2 residues coordinate Mg(2+): Glu279 and Glu292.

The protein belongs to the phosphohexose mutase family. It depends on Mg(2+) as a cofactor. Mn(2+) is required as a cofactor.

The enzyme catalyses 5-amino-1-(5-phospho-beta-D-ribosyl)imidazole-4-carboxamide + formate + ATP = 5-formamido-1-(5-phospho-D-ribosyl)imidazole-4-carboxamide + ADP + phosphate. It functions in the pathway purine metabolism; IMP biosynthesis via de novo pathway; 5-formamido-1-(5-phospho-D-ribosyl)imidazole-4-carboxamide from 5-amino-1-(5-phospho-D-ribosyl)imidazole-4-carboxamide (formate route): step 1/1. In terms of biological role, catalyzes the ATP- and formate-dependent formylation of 5-aminoimidazole-4-carboxamide-1-beta-d-ribofuranosyl 5'-monophosphate (AICAR) to 5-formaminoimidazole-4-carboxamide-1-beta-d-ribofuranosyl 5'-monophosphate (FAICAR) in the absence of folates. The chain is 5-formaminoimidazole-4-carboxamide-1-(beta)-D-ribofuranosyl 5'-monophosphate synthetase from Pyrobaculum neutrophilum (strain DSM 2338 / JCM 9278 / NBRC 100436 / V24Sta) (Thermoproteus neutrophilus).